The sequence spans 130 residues: Large ribosomal subunit protein bL21 (130 aa).

Belongs to the bacterial ribosomal protein bL21 family. In terms of assembly, part of the 50S ribosomal subunit. Contacts protein L20.

Functionally, this protein binds to 23S rRNA in the presence of protein L20. This is Large ribosomal subunit protein bL21 from Trichormus variabilis (strain ATCC 29413 / PCC 7937) (Anabaena variabilis).